The chain runs to 204 residues: Partner of Y14 and mago (204 aa).

Disordered stretches follow at residues 1 to 27 and 52 to 142; these read MSTY…RKAR and QRQA…LDAP. Residues 68 to 90 are compositionally biased toward basic and acidic residues; it reads ESKKEREKQERTRAKKQEKESGR. Over residues 120-130 the composition is skewed to polar residues; that stretch reads PSGSRDINSIS. Residues 149–181 adopt a coiled-coil conformation; sequence AKQLKKLRKKIREIEQIESRIQAGEQKKLDKDQ.

It belongs to the pym family. Interacts (via N-terminus) with mago and tsu/Y14; the interaction is direct.

It localises to the cytoplasm. The protein resides in the nucleus. Its function is as follows. Regulator of the exon junction complex (EJC), a multiprotein complex that associates immediately upstream of the exon-exon junction on mRNAs and serves as a positional landmarks for the intron exon structure of genes and directs post-transcriptional processes in the cytoplasm such as mRNA export, nonsense-mediated mRNA decay (NMD) or translation. The chain is Partner of Y14 and mago from Drosophila simulans (Fruit fly).